The primary structure comprises 203 residues: Urease accessory protein UreG (203 aa).

14–21 (GPVGSGKT) contacts GTP.

The protein belongs to the SIMIBI class G3E GTPase family. UreG subfamily. As to quaternary structure, homodimer. UreD, UreF and UreG form a complex that acts as a GTP-hydrolysis-dependent molecular chaperone, activating the urease apoprotein by helping to assemble the nickel containing metallocenter of UreC. The UreE protein probably delivers the nickel.

The protein resides in the cytoplasm. Functionally, facilitates the functional incorporation of the urease nickel metallocenter. This process requires GTP hydrolysis, probably effectuated by UreG. The polypeptide is Urease accessory protein UreG (Rhizobium meliloti (strain 1021) (Ensifer meliloti)).